The following is a 156-amino-acid chain: Small ribosomal subunit protein uS7 (156 aa).

It belongs to the universal ribosomal protein uS7 family. Part of the 30S ribosomal subunit. Contacts proteins S9 and S11.

Its function is as follows. One of the primary rRNA binding proteins, it binds directly to 16S rRNA where it nucleates assembly of the head domain of the 30S subunit. Is located at the subunit interface close to the decoding center, probably blocks exit of the E-site tRNA. This Bordetella bronchiseptica (strain ATCC BAA-588 / NCTC 13252 / RB50) (Alcaligenes bronchisepticus) protein is Small ribosomal subunit protein uS7.